Consider the following 248-residue polypeptide: Small ribosomal subunit protein uS3 (248 aa).

The KH type-2 domain occupies 39 to 111; the sequence is IRKYLNKVYK…EIVFNVVEVK (73 aa). The tract at residues 222-248 is disordered; it reads KPFEASAPRPQRRNRKEANNYVNAKKN.

The protein belongs to the universal ribosomal protein uS3 family. In terms of assembly, part of the 30S ribosomal subunit. Forms a tight complex with proteins S10 and S14.

Functionally, binds the lower part of the 30S subunit head. Binds mRNA in the 70S ribosome, positioning it for translation. The protein is Small ribosomal subunit protein uS3 of Alteracholeplasma palmae (strain ATCC 49389 / J233) (Acholeplasma palmae).